We begin with the raw amino-acid sequence, 503 residues long: Maturase K (503 aa).

Belongs to the intron maturase 2 family. MatK subfamily.

The protein resides in the plastid. The protein localises to the chloroplast. In terms of biological role, usually encoded in the trnK tRNA gene intron. Probably assists in splicing its own and other chloroplast group II introns. This chain is Maturase K, found in Vicia faba (Broad bean).